The primary structure comprises 237 residues: Pyridoxal phosphate homeostasis protein (237 aa).

The residue at position 31 (Lys-31) is an N6-(pyridoxal phosphate)lysine.

This sequence belongs to the pyridoxal phosphate-binding protein YggS/PROSC family.

Its subcellular location is the cytoplasm. The protein localises to the nucleus. Pyridoxal 5'-phosphate (PLP)-binding protein, which may be involved in intracellular homeostatic regulation of pyridoxal 5'-phosphate (PLP), the active form of vitamin B6. The protein is Pyridoxal phosphate homeostasis protein of Schizosaccharomyces pombe (strain 972 / ATCC 24843) (Fission yeast).